Reading from the N-terminus, the 680-residue chain is Dipeptidyl carboxypeptidase (680 aa).

Residue His-469 participates in Zn(2+) binding. Residue Glu-470 is part of the active site. The Zn(2+) site is built by His-473 and His-476.

This sequence belongs to the peptidase M3 family. Requires Zn(2+) as cofactor.

The protein localises to the cytoplasm. The catalysed reaction is Hydrolysis of unblocked, C-terminal dipeptides from oligopeptides, with broad specificity. Does not hydrolyze bonds in which P1' is Pro, or both P1 and P1' are Gly.. Removes dipeptides from the C-termini of N-blocked tripeptides, tetrapeptides and larger peptides. This Salmonella typhimurium (strain LT2 / SGSC1412 / ATCC 700720) protein is Dipeptidyl carboxypeptidase (dcp).